The following is a 90-amino-acid chain: Protein RALF-like 29 (90 aa).

Residues 1–25 (MIKTKEVTFVTILIVLCVFISTIHA) form the signal peptide. 2 cysteine pairs are disulfide-bonded: cysteine 41/cysteine 50 and cysteine 63/cysteine 69.

Belongs to the plant rapid alkalinization factor (RALF) family.

It localises to the secreted. In terms of biological role, cell signaling peptide that may regulate plant stress, growth, and development. Mediates a rapid alkalinization of extracellular space by mediating a transient increase in the cytoplasmic Ca(2+) concentration leading to a calcium-dependent signaling events through a cell surface receptor and a concomitant activation of some intracellular mitogen-activated protein kinases. The sequence is that of Protein RALF-like 29 (RALFL29) from Arabidopsis thaliana (Mouse-ear cress).